Reading from the N-terminus, the 215-residue chain is Probable septum site-determining protein MinC (215 aa).

Belongs to the MinC family. As to quaternary structure, interacts with MinD and FtsZ.

Functionally, cell division inhibitor that blocks the formation of polar Z ring septums. Rapidly oscillates between the poles of the cell to destabilize FtsZ filaments that have formed before they mature into polar Z rings. Prevents FtsZ polymerization. The chain is Probable septum site-determining protein MinC from Clostridium botulinum (strain Alaska E43 / Type E3).